We begin with the raw amino-acid sequence, 51 residues long: MAAQKSFRIKQKMAKAKKQNRPLPQWIRLRTNNTIRYNAKRRNWRRTKMNI.

The tract at residues 1-22 (MAAQKSFRIKQKMAKAKKQNRP) is disordered. Residues 7–20 (FRIKQKMAKAKKQN) show a composition bias toward basic residues.

Belongs to the eukaryotic ribosomal protein eL39 family. In terms of assembly, component of the large ribosomal subunit (LSU). Mature yeast ribosomes consist of a small (40S) and a large (60S) subunit. The 40S small subunit contains 1 molecule of ribosomal RNA (18S rRNA) and 33 different proteins (encoded by 57 genes). The large 60S subunit contains 3 rRNA molecules (25S, 5.8S and 5S rRNA) and 46 different proteins (encoded by 81 genes). eL39 interacts with YIH1.

Its subcellular location is the cytoplasm. Functionally, component of the ribosome, a large ribonucleoprotein complex responsible for the synthesis of proteins in the cell. The small ribosomal subunit (SSU) binds messenger RNAs (mRNAs) and translates the encoded message by selecting cognate aminoacyl-transfer RNA (tRNA) molecules. The large subunit (LSU) contains the ribosomal catalytic site termed the peptidyl transferase center (PTC), which catalyzes the formation of peptide bonds, thereby polymerizing the amino acids delivered by tRNAs into a polypeptide chain. The nascent polypeptides leave the ribosome through a tunnel in the LSU and interact with protein factors that function in enzymatic processing, targeting, and the membrane insertion of nascent chains at the exit of the ribosomal tunnel. The protein is Large ribosomal subunit protein eL39 of Saccharomyces cerevisiae (strain ATCC 204508 / S288c) (Baker's yeast).